A 145-amino-acid chain; its full sequence is 3-hydroxyacyl-[acyl-carrier-protein] dehydratase FabZ (145 aa).

His-47 is a catalytic residue.

This sequence belongs to the thioester dehydratase family. FabZ subfamily.

It is found in the cytoplasm. It catalyses the reaction a (3R)-hydroxyacyl-[ACP] = a (2E)-enoyl-[ACP] + H2O. Involved in unsaturated fatty acids biosynthesis. Catalyzes the dehydration of short chain beta-hydroxyacyl-ACPs and long chain saturated and unsaturated beta-hydroxyacyl-ACPs. This chain is 3-hydroxyacyl-[acyl-carrier-protein] dehydratase FabZ, found in Chromohalobacter salexigens (strain ATCC BAA-138 / DSM 3043 / CIP 106854 / NCIMB 13768 / 1H11).